The following is a 313-amino-acid chain: Malate dehydrogenase (313 aa).

Residue 11–16 participates in NAD(+) binding; it reads GAGHTG. Residues Arg86 and Arg92 each contribute to the substrate site. NAD(+) contacts are provided by residues Asn99 and 122-124; that span reads LTN. Residues Asn124 and Arg155 each coordinate substrate. The Proton acceptor role is filled by His179.

This sequence belongs to the LDH/MDH superfamily. MDH type 3 family.

It carries out the reaction (S)-malate + NAD(+) = oxaloacetate + NADH + H(+). Functionally, catalyzes the reversible oxidation of malate to oxaloacetate. The polypeptide is Malate dehydrogenase (Staphylococcus epidermidis (strain ATCC 35984 / DSM 28319 / BCRC 17069 / CCUG 31568 / BM 3577 / RP62A)).